The chain runs to 174 residues: RNA pyrophosphohydrolase (174 aa).

A Nudix hydrolase domain is found at proline 14 to alanine 167. The Nudix box motif lies at glycine 55–glycine 76.

It belongs to the Nudix hydrolase family. RppH subfamily. Requires a divalent metal cation as cofactor.

In terms of biological role, accelerates the degradation of transcripts by removing pyrophosphate from the 5'-end of triphosphorylated RNA, leading to a more labile monophosphorylated state that can stimulate subsequent ribonuclease cleavage. In Brucella anthropi (strain ATCC 49188 / DSM 6882 / CCUG 24695 / JCM 21032 / LMG 3331 / NBRC 15819 / NCTC 12168 / Alc 37) (Ochrobactrum anthropi), this protein is RNA pyrophosphohydrolase.